Consider the following 83-residue polypeptide: Sec-independent protein translocase protein TatA (83 aa).

Residues 1–21 form a helical membrane-spanning segment; that stretch reads MGGLSLPHLIVLALVVLILFG. Residues 34–83 form a disordered region; sequence KGIKSFKQGMNDEDSKPVTPPPAQIPPASLQQTPPPAQPAPQPTSTDQAQ. Residues 66-75 show a composition bias toward pro residues; that stretch reads TPPPAQPAPQ.

The protein belongs to the TatA/E family. As to quaternary structure, the Tat system comprises two distinct complexes: a TatABC complex, containing multiple copies of TatA, TatB and TatC subunits, and a separate TatA complex, containing only TatA subunits. Substrates initially bind to the TatABC complex, which probably triggers association of the separate TatA complex to form the active translocon.

It is found in the cell inner membrane. In terms of biological role, part of the twin-arginine translocation (Tat) system that transports large folded proteins containing a characteristic twin-arginine motif in their signal peptide across membranes. TatA could form the protein-conducting channel of the Tat system. The protein is Sec-independent protein translocase protein TatA of Novosphingobium aromaticivorans (strain ATCC 700278 / DSM 12444 / CCUG 56034 / CIP 105152 / NBRC 16084 / F199).